A 341-amino-acid chain; its full sequence is Anthranilate phosphoribosyltransferase (341 aa).

5-phospho-alpha-D-ribose 1-diphosphate is bound by residues Gly-79, 82–83, Thr-87, 89–92, 107–115, and Ser-119; these read GD, NIST, and KHGNRAVSS. Gly-79 lines the anthranilate pocket. Ser-91 contacts Mg(2+). Asn-110 provides a ligand contact to anthranilate. Arg-165 is an anthranilate binding site. The Mg(2+) site is built by Asp-224 and Glu-225.

It belongs to the anthranilate phosphoribosyltransferase family. Homodimer. Requires Mg(2+) as cofactor.

It carries out the reaction N-(5-phospho-beta-D-ribosyl)anthranilate + diphosphate = 5-phospho-alpha-D-ribose 1-diphosphate + anthranilate. It participates in amino-acid biosynthesis; L-tryptophan biosynthesis; L-tryptophan from chorismate: step 2/5. Its function is as follows. Catalyzes the transfer of the phosphoribosyl group of 5-phosphorylribose-1-pyrophosphate (PRPP) to anthranilate to yield N-(5'-phosphoribosyl)-anthranilate (PRA). The polypeptide is Anthranilate phosphoribosyltransferase (Bacillus cereus (strain G9842)).